We begin with the raw amino-acid sequence, 379 residues long: Putative F-box protein At2g33190 (379 aa).

The F-box domain maps to 6-53 (NGWSKLYPDLLRSIFESLSCLDFHRAGTVCSNWYAVSRSCPLYPWRIV).

The sequence is that of Putative F-box protein At2g33190 from Arabidopsis thaliana (Mouse-ear cress).